A 433-amino-acid chain; its full sequence is Enolase (433 aa).

Gln-167 lines the (2R)-2-phosphoglycerate pocket. Glu-209 (proton donor) is an active-site residue. The Mg(2+) site is built by Asp-246, Glu-291, and Asp-318. (2R)-2-phosphoglycerate contacts are provided by Lys-343, Arg-372, Ser-373, and Lys-394. Residue Lys-343 is the Proton acceptor of the active site.

The protein belongs to the enolase family. In terms of assembly, component of the RNA degradosome, a multiprotein complex involved in RNA processing and mRNA degradation. Requires Mg(2+) as cofactor.

Its subcellular location is the cytoplasm. The protein resides in the secreted. It is found in the cell surface. The enzyme catalyses (2R)-2-phosphoglycerate = phosphoenolpyruvate + H2O. The protein operates within carbohydrate degradation; glycolysis; pyruvate from D-glyceraldehyde 3-phosphate: step 4/5. Catalyzes the reversible conversion of 2-phosphoglycerate (2-PG) into phosphoenolpyruvate (PEP). It is essential for the degradation of carbohydrates via glycolysis. This is Enolase from Aeromonas salmonicida (strain A449).